Reading from the N-terminus, the 665-residue chain is DNA ligase (665 aa).

NAD(+) contacts are provided by residues 34 to 38, 83 to 84, and Glu-114; these read DEEYD and SL. The active-site N6-AMP-lysine intermediate is the Lys-116. The NAD(+) site is built by Arg-137, Glu-171, Lys-287, and Lys-311. Residues Cys-405, Cys-408, Cys-424, and Cys-429 each coordinate Zn(2+). A BRCT domain is found at 587–665; that stretch reads KKSSKLAGLT…EDEFKKMIID (79 aa).

The protein belongs to the NAD-dependent DNA ligase family. LigA subfamily. Requires Mg(2+) as cofactor. It depends on Mn(2+) as a cofactor.

It carries out the reaction NAD(+) + (deoxyribonucleotide)n-3'-hydroxyl + 5'-phospho-(deoxyribonucleotide)m = (deoxyribonucleotide)n+m + AMP + beta-nicotinamide D-nucleotide.. DNA ligase that catalyzes the formation of phosphodiester linkages between 5'-phosphoryl and 3'-hydroxyl groups in double-stranded DNA using NAD as a coenzyme and as the energy source for the reaction. It is essential for DNA replication and repair of damaged DNA. This Thermosipho africanus (strain TCF52B) protein is DNA ligase.